The following is a 919-amino-acid chain: UPF0182 protein SUN_1015 (919 aa).

A run of 7 helical transmembrane segments spans residues 8 to 28 (IIIT…VDYY), 51 to 71 (ILSF…HIHF), 102 to 122 (AVAW…GSYA), 158 to 178 (VYQF…IGVL), 207 to 227 (LTAF…YNIL), 246 to 266 (IPAY…LFFY), and 274 to 294 (VIVS…WIYP).

It belongs to the UPF0182 family.

The protein localises to the cell membrane. The polypeptide is UPF0182 protein SUN_1015 (Sulfurovum sp. (strain NBC37-1)).